The chain runs to 341 residues: Cell wall mannoprotein PIR1 (341 aa).

The N-terminal stretch at 1 to 18 (MQYKKSLVASALVATSLA) is a signal peptide. Residues 19–63 (AYAPKDPWSTLTPSATYKGGITDYSSTFGIAVEPIATTASSKAKR) constitute a propeptide that is removed on maturation. PIR1/2/3 repeat units follow at residues 64-82 (AAAI…TKTT), 83-101 (AAAV…TKTK), 102-125 (AAAV…AKTT), 126-144 (AAAV…TKTK), 145-163 (AAAV…TKTT), 164-182 (AAAV…TKTT), 183-201 (AAAV…TNTT), and 202-220 (VAPV…TLTS).

It belongs to the PIR protein family. In terms of processing, covalently linked to beta-1,3-glucan of the inner cell wall layer via an alkali-sensitive ester linkage between the gamma-carboxyl group of glutamic acids, arising from specific glutamines within the PIR1/2/3 repeats, and hydroxyl groups of glucoses of beta-1,3-glucan chains. Post-translationally, O-glycosylated. Extensively O-mannosylated.

It localises to the secreted. The protein localises to the cell wall. Component of the outer cell wall layer. Required for stability of the cell wall and for optimal growth. Required for resistance against several antifungal and cell wall-perturbing agents and for tolerance to heat shock. This chain is Cell wall mannoprotein PIR1 (PIR1), found in Saccharomyces cerevisiae (strain ATCC 204508 / S288c) (Baker's yeast).